Consider the following 362-residue polypeptide: Phospho-N-acetylmuramoyl-pentapeptide-transferase (362 aa).

10 consecutive transmembrane segments (helical) span residues 28-48, 73-93, 100-120, 134-154, 169-189, 201-221, 241-261, 264-284, 290-310, and 339-359; these read GATVTALLISFLFGPRIIALL, TPTMGGFLILVGLVPSVLLWA, VWIVLFVTLGFGAVGFADDYL, VKLFFEFVIALIAMWALVLVS, TLLIELGGFFFLFGALVIVGS, GLAIVPVMIAAASLGLIVYLV, LAVFCGALIGAGLGFLWYNAP, MVFMGDTGSLALGGALGAIAV, LVLAIIGGLFVLEAVSVIVQV, and TVVVRFWIISVVLAMAGLATL.

This sequence belongs to the glycosyltransferase 4 family. MraY subfamily. Mg(2+) is required as a cofactor.

Its subcellular location is the cell inner membrane. The enzyme catalyses UDP-N-acetyl-alpha-D-muramoyl-L-alanyl-gamma-D-glutamyl-meso-2,6-diaminopimeloyl-D-alanyl-D-alanine + di-trans,octa-cis-undecaprenyl phosphate = di-trans,octa-cis-undecaprenyl diphospho-N-acetyl-alpha-D-muramoyl-L-alanyl-D-glutamyl-meso-2,6-diaminopimeloyl-D-alanyl-D-alanine + UMP. Its pathway is cell wall biogenesis; peptidoglycan biosynthesis. Catalyzes the initial step of the lipid cycle reactions in the biosynthesis of the cell wall peptidoglycan: transfers peptidoglycan precursor phospho-MurNAc-pentapeptide from UDP-MurNAc-pentapeptide onto the lipid carrier undecaprenyl phosphate, yielding undecaprenyl-pyrophosphoryl-MurNAc-pentapeptide, known as lipid I. In Parvibaculum lavamentivorans (strain DS-1 / DSM 13023 / NCIMB 13966), this protein is Phospho-N-acetylmuramoyl-pentapeptide-transferase.